The chain runs to 548 residues: Beta-caryophyllene synthase (548 aa).

Residues Arg-268, Asp-305, Asp-309, Arg-446, and Asp-449 each coordinate (2E,6E)-farnesyl diphosphate. Residues Asp-305 and Asp-309 each contribute to the Mg(2+) site. The DDXXD motif signature appears at 305–309; sequence DDIYD. Mg(2+) is bound by residues Asp-449 and Glu-457.

The protein belongs to the terpene synthase family. Requires Mg(2+) as cofactor.

It carries out the reaction (2E,6E)-farnesyl diphosphate = (-)-(E)-beta-caryophyllene + diphosphate. The protein operates within secondary metabolite biosynthesis; terpenoid biosynthesis. In terms of biological role, sesquiterpene synthase that catalyzes the formation of sesquiterpenes and sesquiterpenoid alcohols. Converts farnesyl diphosphate (FPP) to beta-caryophyllene. Can use geranyl diphosphate (GPP) to produce myrcene, limonene and camphene. This chain is Beta-caryophyllene synthase, found in Lavandula angustifolia (Lavender).